The chain runs to 367 residues: UDP-N-acetylglucosamine--N-acetylmuramyl-(pentapeptide) pyrophosphoryl-undecaprenol N-acetylglucosamine transferase (367 aa).

Residues 15–17 (TGG), asparagine 127, arginine 163, serine 191, isoleucine 249, and glutamine 294 contribute to the UDP-N-acetyl-alpha-D-glucosamine site.

The protein belongs to the glycosyltransferase 28 family. MurG subfamily.

It localises to the cell inner membrane. It catalyses the reaction di-trans,octa-cis-undecaprenyl diphospho-N-acetyl-alpha-D-muramoyl-L-alanyl-D-glutamyl-meso-2,6-diaminopimeloyl-D-alanyl-D-alanine + UDP-N-acetyl-alpha-D-glucosamine = di-trans,octa-cis-undecaprenyl diphospho-[N-acetyl-alpha-D-glucosaminyl-(1-&gt;4)]-N-acetyl-alpha-D-muramoyl-L-alanyl-D-glutamyl-meso-2,6-diaminopimeloyl-D-alanyl-D-alanine + UDP + H(+). The protein operates within cell wall biogenesis; peptidoglycan biosynthesis. Cell wall formation. Catalyzes the transfer of a GlcNAc subunit on undecaprenyl-pyrophosphoryl-MurNAc-pentapeptide (lipid intermediate I) to form undecaprenyl-pyrophosphoryl-MurNAc-(pentapeptide)GlcNAc (lipid intermediate II). This is UDP-N-acetylglucosamine--N-acetylmuramyl-(pentapeptide) pyrophosphoryl-undecaprenol N-acetylglucosamine transferase from Burkholderia pseudomallei (strain 1106a).